We begin with the raw amino-acid sequence, 344 residues long: Uroporphyrinogen decarboxylase (344 aa).

Residues 23–27 (RQAGR), aspartate 73, tyrosine 149, threonine 204, and histidine 321 each bind substrate.

The protein belongs to the uroporphyrinogen decarboxylase family. In terms of assembly, homodimer.

The protein localises to the cytoplasm. The enzyme catalyses uroporphyrinogen III + 4 H(+) = coproporphyrinogen III + 4 CO2. The protein operates within porphyrin-containing compound metabolism; protoporphyrin-IX biosynthesis; coproporphyrinogen-III from 5-aminolevulinate: step 4/4. Its function is as follows. Catalyzes the decarboxylation of four acetate groups of uroporphyrinogen-III to yield coproporphyrinogen-III. The polypeptide is Uroporphyrinogen decarboxylase (Francisella tularensis subsp. novicida (strain U112)).